Here is a 93-residue protein sequence, read N- to C-terminus: Acyl carrier protein AcpXL (93 aa).

In terms of domain architecture, Carrier spans 2 to 88 (SSTFDKVADI…NLCAKIDELV (87 aa)). An O-(pantetheine 4'-phosphoryl)serine modification is found at Ser37.

In terms of processing, 4'-phosphopantetheine is transferred from CoA to a specific serine of apo-ACP by AcpS. This modification is essential for activity because fatty acids are bound in thioester linkage to the sulfhydryl of the prosthetic group.

It is found in the cytoplasm. The protein operates within glycolipid biosynthesis; KDO(2)-lipid A biosynthesis. Its function is as follows. Carrier of the growing fatty acid chain in fatty acid biosynthesis. Is involved in the transfer of long hydroxylated fatty acids to lipid A. This chain is Acyl carrier protein AcpXL (acpXL), found in Brucella melitensis biotype 1 (strain ATCC 23456 / CCUG 17765 / NCTC 10094 / 16M).